Reading from the N-terminus, the 114-residue chain is Beta-microseminoprotein (114 aa).

An N-terminal signal peptide occupies residues 1-20 (MNVLLGGFVIFATFVTLCNA). 5 disulfide bridges follow: C22-C70, C38-C62, C57-C93, C60-C69, and C84-C107.

It belongs to the beta-microseminoprotein family. Homodimer; Interacts with PI16.

Its subcellular location is the secreted. The protein is Beta-microseminoprotein (MSMB) of Macaca mulatta (Rhesus macaque).